Here is a 1370-residue protein sequence, read N- to C-terminus: MAYSIANNQLLRKNFAKIKKIIDIPNLIDIQKNSYKRFLQIDTPPEARKNSGLEAVFKSVFPIKDFSDTASLEYVTYTLGAPKYDVEECHQRGMTFAAPMKVKVRLVVWDVNKDTGVRSIRDIKEQEVYFGEIPLMTENGTFIINGTERVIVSQLHRSPGVFYDHDKGKTHSSGKVLYSARVIPYRGSWLDFEFDHKDILFVRIDRRRKMPATVLLKALGYSAEALLNYFYKSEEILVAAEGMWKKADPELLASQKASVDIVAPKTGEVLLKANRKFTKAAIRKMTEHGITQIPITMEEVLGKYASNDIVDPSTGEVIVECNDEITQARLDDIKAKGITEFKVLFIDNLHVTSSLRDTLIADKIAATEEALIEIYRRLRPGDPPTLKSAQALFENLFFNAERYDLSAVGRLKLNFKLGLNVPLDCQTLTKDDVLEVVRYLIDLKNGKGTIDDIDHLGNRRVRAVGELLENQYRIGLVRMERAIKERMSLQEVENLMPHDLINSKPVSAVVKEFFGSSQLSQFMDQTNPLSEVTHKRRLSALGPGGLTRERAGFEVRDVHPTHYGRVCPIETPEGPNIGLIASLSTYARINEHGFVETPYRIVQDGKVTSDVKFFSALEEEGHAIAQANAEMDADGRFVNEYVSARKSGEFLLVHRDELELMDVAPMQLVSVAASLIPFLENDDANRALMGSNMQRQAVPLLKADSPLVGTGMERVVAKDSGVSVVARHTGIVESVDASRIVVKIDEDEFDETGTGVDIYNLIKFARSNQNTCINQRPVVKVGDHVKRGDVIADGPSTDMGELALGQNVVVAFMPWGGYNFEDSILVSEKLVKDDRYTSIHIEEFECVARDTKLGKEEITSDIPNLGEEALKDLDESGIIRIGAEVKPGDILVGKITPKGETQLSPEEKLLRAIFGEKAGDVRDTSLRVPPGVEGTVIGAKIFSRKGADKDSRTEMIERMEEDKLRKDEQDEIRIIRNSAVGKLKKLLVGKSAAVKVEDKSGRTVIAKGAAITEEALDAIPLDRWDEISVSGEAGVDEKVSAILQTLQQQIDIIRYVFDDKVQKLKRGDDLPPGVIKMVKVYIAIKRKLQVGDKMAGRHGNKGVVSRILPEEDMPYMEDGRPVEIVLNPLGVPSRMNVGQILETHLGWAAKGIGWKIEEMLESYSPADHIKGYLKDVYGTTEMDTFLDSLDKDELMNVAKRLQRGVAMASPVFEGASEEQIRSMLDKAGFDETAQVSLYDGKSGEPFKHKVTVGVMYVLKLHHLVDDKIHARSIGPYSLVTQQPLGGKAQFGGQRLGEMEVWAMEAYGAAYALQEFLTVKSDDVAGRTRMYEAIVKGKHTLEPGLPESFNVLIKELQSLCLDVELLEGDED.

It belongs to the RNA polymerase beta chain family. In terms of assembly, the RNAP catalytic core consists of 2 alpha, 1 beta, 1 beta' and 1 omega subunit. When a sigma factor is associated with the core the holoenzyme is formed, which can initiate transcription.

The catalysed reaction is RNA(n) + a ribonucleoside 5'-triphosphate = RNA(n+1) + diphosphate. In terms of biological role, DNA-dependent RNA polymerase catalyzes the transcription of DNA into RNA using the four ribonucleoside triphosphates as substrates. The sequence is that of DNA-directed RNA polymerase subunit beta from Geobacter sulfurreducens (strain ATCC 51573 / DSM 12127 / PCA).